Here is a 681-residue protein sequence, read N- to C-terminus: Minichromosome maintenance domain-containing protein 2 (681 aa).

At Ser-292 the chain carries Phosphoserine. Residues 533-621 enclose the MCM domain; that stretch reads KQFTTEDFEK…LIAALLLEIS (89 aa).

Predominantly expressed in the gonads and the brain. Not detected in the heart, lung, nor embryonic fibroblasts.

Plays an important role in meiotic recombination and associated DNA double-strand break repair. This Mus musculus (Mouse) protein is Minichromosome maintenance domain-containing protein 2 (Mcmdc2).